A 227-amino-acid polypeptide reads, in one-letter code: Orotidine 5'-phosphate decarboxylase (227 aa).

Substrate-binding positions include D12, K34, 61 to 70, T117, R178, Q187, G207, and R208; that span reads DLKLHDIPNT. Residue K63 is the Proton donor of the active site.

Belongs to the OMP decarboxylase family. Type 1 subfamily. In terms of assembly, homodimer.

The enzyme catalyses orotidine 5'-phosphate + H(+) = UMP + CO2. It functions in the pathway pyrimidine metabolism; UMP biosynthesis via de novo pathway; UMP from orotate: step 2/2. Functionally, catalyzes the decarboxylation of orotidine 5'-monophosphate (OMP) to uridine 5'-monophosphate (UMP). This is Orotidine 5'-phosphate decarboxylase from Anaeromyxobacter dehalogenans (strain 2CP-1 / ATCC BAA-258).